A 321-amino-acid polypeptide reads, in one-letter code: Putative ribose-phosphate pyrophosphokinase 2 (321 aa).

Residues 41–43 (DGE) and 100–101 (RQ) contribute to the ATP site. Histidine 134 contributes to the Mg(2+) binding site. D-ribose 5-phosphate-binding positions include aspartate 223 and 227–231 (NTGVT).

It belongs to the ribose-phosphate pyrophosphokinase family. Class I subfamily. Homohexamer. Requires Mg(2+) as cofactor.

The protein localises to the cytoplasm. The catalysed reaction is D-ribose 5-phosphate + ATP = 5-phospho-alpha-D-ribose 1-diphosphate + AMP + H(+). Its pathway is metabolic intermediate biosynthesis; 5-phospho-alpha-D-ribose 1-diphosphate biosynthesis; 5-phospho-alpha-D-ribose 1-diphosphate from D-ribose 5-phosphate (route I): step 1/1. Functionally, involved in the biosynthesis of the central metabolite phospho-alpha-D-ribosyl-1-pyrophosphate (PRPP) via the transfer of pyrophosphoryl group from ATP to 1-hydroxyl of ribose-5-phosphate (Rib-5-P). This chain is Putative ribose-phosphate pyrophosphokinase 2, found in Lactococcus lactis subsp. lactis (strain IL1403) (Streptococcus lactis).